A 200-amino-acid chain; its full sequence is uncharacterized protein (200 aa).

The protein belongs to the HAD-like hydrolase superfamily. CbbY/CbbZ/Gph/YieH family.

This is an uncharacterized protein from Haemophilus influenzae (strain ATCC 51907 / DSM 11121 / KW20 / Rd).